The sequence spans 311 residues: Protoheme IX farnesyltransferase 1 (311 aa).

A run of 9 helical transmembrane segments spans residues 31–51 (VMAL…GAVN), 52–72 (PVIA…AGAL), 97–117 (VTPG…VMTL), 119–139 (VLVG…YIVI), 152–172 (IVIG…AATG), 179–199 (LVLF…LALF), 225–245 (ILAY…FGFT), 247–267 (GYYG…SWKV), and 281–301 (LFAY…ADTI).

It belongs to the UbiA prenyltransferase family. Protoheme IX farnesyltransferase subfamily.

Its subcellular location is the cell inner membrane. It catalyses the reaction heme b + (2E,6E)-farnesyl diphosphate + H2O = Fe(II)-heme o + diphosphate. It participates in porphyrin-containing compound metabolism; heme O biosynthesis; heme O from protoheme: step 1/1. In terms of biological role, converts heme B (protoheme IX) to heme O by substitution of the vinyl group on carbon 2 of heme B porphyrin ring with a hydroxyethyl farnesyl side group. The protein is Protoheme IX farnesyltransferase 1 of Mesorhizobium japonicum (strain LMG 29417 / CECT 9101 / MAFF 303099) (Mesorhizobium loti (strain MAFF 303099)).